The sequence spans 621 residues: MAU2 chromatid cohesion factor homolog (621 aa).

TPR repeat units follow at residues Phe96–Asn129, Gly451–Glu484, and Ser491–Ile524.

This sequence belongs to the SCC4/mau-2 family. As to quaternary structure, interacts with Nipped-B to form the cohesin loading complex.

The protein localises to the nucleus. The protein resides in the nucleoplasm. Required for association of the cohesin complex with chromatin during interphase. Plays a role in sister chromatid cohesion and normal progression through prometaphase. The protein is MAU2 chromatid cohesion factor homolog of Drosophila virilis (Fruit fly).